The following is a 123-amino-acid chain: rRNA-processing protein cgr-1 (123 aa).

The span at Met-1–Gln-13 shows a compositional bias: low complexity. Disordered regions lie at residues Met-1–Ser-47 and Glu-85–Ser-123. The stretch at Glu-49–Arg-110 forms a coiled coil. Positions Glu-85–Lys-102 are enriched in basic and acidic residues. Over residues Met-103 to Ser-123 the composition is skewed to basic residues.

It belongs to the CGR1 family.

It is found in the nucleus. The protein localises to the nucleolus. Involved in nucleolar integrity and required for processing of the pre-rRNA for the 60S ribosome subunit. The protein is rRNA-processing protein cgr-1 (cgr-1) of Neurospora crassa (strain ATCC 24698 / 74-OR23-1A / CBS 708.71 / DSM 1257 / FGSC 987).